A 55-amino-acid chain; its full sequence is Large ribosomal subunit protein bL33 (55 aa).

This sequence belongs to the bacterial ribosomal protein bL33 family.

This Rhodopseudomonas palustris (strain BisB18) protein is Large ribosomal subunit protein bL33.